Here is a 469-residue protein sequence, read N- to C-terminus: 3-isopropylmalate dehydratase large subunit (469 aa).

Cys-347, Cys-408, and Cys-411 together coordinate [4Fe-4S] cluster.

It belongs to the aconitase/IPM isomerase family. LeuC type 1 subfamily. In terms of assembly, heterodimer of LeuC and LeuD. [4Fe-4S] cluster serves as cofactor.

The catalysed reaction is (2R,3S)-3-isopropylmalate = (2S)-2-isopropylmalate. Its pathway is amino-acid biosynthesis; L-leucine biosynthesis; L-leucine from 3-methyl-2-oxobutanoate: step 2/4. Catalyzes the isomerization between 2-isopropylmalate and 3-isopropylmalate, via the formation of 2-isopropylmaleate. The polypeptide is 3-isopropylmalate dehydratase large subunit (Haemophilus influenzae (strain 86-028NP)).